Consider the following 189-residue polypeptide: Small ribosomal subunit protein uS5 (189 aa).

An S5 DRBM domain is found at 22 to 85 (FVDKLVAINR…EAAKRDLIFV (64 aa)).

It belongs to the universal ribosomal protein uS5 family. Part of the 30S ribosomal subunit. Contacts proteins S4 and S8.

Functionally, with S4 and S12 plays an important role in translational accuracy. Its function is as follows. Located at the back of the 30S subunit body where it stabilizes the conformation of the head with respect to the body. The chain is Small ribosomal subunit protein uS5 from Sinorhizobium fredii (strain NBRC 101917 / NGR234).